Reading from the N-terminus, the 1307-residue chain is Histone-lysine N-methyltransferase SETDB1 (1307 aa).

The stretch at 30-65 (VEELGISMEELRQYIDEELEKMDCIQQRKKQLAELE) forms a coiled coil. Serine 112 and serine 117 each carry phosphoserine. A Phosphothreonine modification is found at threonine 120. The disordered stretch occupies residues 127-148 (DEDDDVLSIDSGDAGSRTPKDQ). Lysine 182 participates in a covalent cross-link: Glycyl lysine isopeptide (Lys-Gly) (interchain with G-Cter in SUMO2); alternate. A Glycyl lysine isopeptide (Lys-Gly) (interchain with G-Cter in ubiquitin); alternate cross-link involves residue lysine 182. Tudor domains follow at residues 257–320 (KLFV…LKKT) and 347–403 (LLKS…SMKT). Disordered regions lie at residues 404-424 (SSASAMEKKQGGQLRTRPNMG), 444-512 (IQFK…TLSE), and 531-570 (SVTSTPASAAPPVPPVPPGPPTPPGPPAPPGPLAPPAFHG). Residues 454–467 (PIAPPAPLPIPPLS) are compositionally biased toward pro residues. Residues 476–494 (ESQLAQSRKQVAKKSTSFR) show a composition bias toward polar residues. Residues 495–512 (PGSVGSGHSSPTSSTLSE) show a composition bias toward low complexity. The span at 539–565 (AAPPVPPVPPGPPTPPGPPAPPGPLAP) shows a compositional bias: pro residues. In terms of domain architecture, MBD spans 611-682 (YRGKNPLLVP…EMFCLDPYVL (72 aa)). One can recognise a Pre-SET domain in the interval 744-817 (VGCDCKDGCR…MCTNRLVQHG (74 aa)). Cysteine 746, cysteine 748, cysteine 752, cysteine 758, cysteine 760, cysteine 798, cysteine 802, cysteine 804, and cysteine 809 together coordinate Zn(2+). Positions 820–1282 (VRLQLFKTQN…AGTELTWDYN (463 aa)) constitute an SET domain. Residues 830–832 (KGW), aspartate 868, and tyrosine 870 contribute to the S-adenosyl-L-methionine site. Lysine 884 participates in a covalent cross-link: Glycyl lysine isopeptide (Lys-Gly) (interchain with G-Cter in ubiquitin). Positions 885-1174 (EGYESDVPTS…KNLSGPTKRQ (290 aa)) are disordered. Residues 913-924 (EDPEESNDDSSD) show a composition bias toward acidic residues. Residues 950 to 966 (GQKENELSEMTSKDSRP) show a composition bias toward basic and acidic residues. Serine 1042 is modified (phosphoserine). The segment covering 1048-1066 (FKDEGDNKQPKKEDPENRN) has biased composition (basic and acidic residues). A Glycyl lysine isopeptide (Lys-Gly) (interchain with G-Cter in SUMO2); alternate cross-link involves residue lysine 1049. Residue lysine 1049 forms a Glycyl lysine isopeptide (Lys-Gly) (interchain with G-Cter in SUMO1); alternate linkage. Residues lysine 1055 and lysine 1085 each participate in a glycyl lysine isopeptide (Lys-Gly) (interchain with G-Cter in SUMO2) cross-link. Positions 1097-1112 (SVLQSQRVVTSTQSNP) are enriched in polar residues. A compositionally biased stretch (low complexity) spans 1116–1131 (LTLSSSTESEGESGTS). A compositionally biased stretch (polar residues) spans 1137–1156 (GHTSATAVDSDDIQTISSGS). Lysine 1165 participates in a covalent cross-link: Glycyl lysine isopeptide (Lys-Gly) (interchain with G-Cter in SUMO2). An N6,N6,N6-trimethyllysine; alternate mark is found at lysine 1186 and lysine 1194. Residues lysine 1186 and lysine 1194 each carry the N6,N6-dimethyllysine; alternate modification. S-adenosyl-L-methionine-binding positions include arginine 1236 and 1239-1240 (NH). Residues cysteine 1242, cysteine 1295, cysteine 1297, and cysteine 1302 each coordinate Zn(2+). Residues 1291-1307 (KELLCCCGAIECRGRLL) enclose the Post-SET domain.

It belongs to the class V-like SAM-binding methyltransferase superfamily. Histone-lysine methyltransferase family. Suvar3-9 subfamily. As to quaternary structure, part of a complex containing at least CDYL, REST, WIZ, SETDB1, EHMT1 and EHMT2. Forms a complex with ATRX, TRIM28 and ZNF274. Probably part of a corepressor complex containing ZNF304, TRIM28, SETDB1 and DNMT1. Interacts with TRIM28/TIF1B. Interacts with ATF7IP and ATF7IP2; the interaction with ATF7IP is required to stimulate histone methyltransferase activity and facilitate the conversion of dimethylated to trimethylated H3 'Lys-9'. Interacts with MBD1; interaction is abolished when MBD1 is sumoylated. Interacts with CBX1 and CBX5. Interacts with DNMT3A and DNMT3B. Interacts with SUMO2. Interacts with MPHOSPH8. Interacts with ERG. Interacts with HDAC1, HDAC2, SIN3A, SIN3B. Interacts with ATRX. Interacts with RESF1. Interacts with ZNF638. Interacts with TASOR. Interacts with ZNF263; recruited to the SIX3 promoter along with other proteins involved in chromatin modification and transcriptional corepression where it contributes to transcriptional repression. Interacts with PHF13; the interaction probably enhances SETDB1 chromatin-associated levels and activity. Interacts with VRK1. Post-translationally, degraded by the proteasome, shielded by interaction with ATF7IP. Monoubiquitinated at Lys-884 by E2 enzymes UBE2E family. The conjugated-Ub is protected from deubiquitination through the SET domain. Monoubiquitination at Lys-884 is required for catalytic activity and H3K9 methylation and endogenous retrovirus silencing. As to expression, ubiquitously expressed. Strong expression in liver and testis. Expressed in the brain, lungs, kidneys, uterus and seminal vesicles.

The protein resides in the nucleus. Its subcellular location is the chromosome. The catalysed reaction is N(6),N(6)-dimethyl-L-lysyl(9)-[histone H3] + S-adenosyl-L-methionine = N(6),N(6),N(6)-trimethyl-L-lysyl(9)-[histone H3] + S-adenosyl-L-homocysteine + H(+). In terms of biological role, histone methyltransferase that specifically trimethylates 'Lys-9' of histone H3. H3 'Lys-9' trimethylation represents a specific tag for epigenetic transcriptional repression by recruiting HP1 (CBX1, CBX3 and/or CBX5) proteins to methylated histones. Mainly functions in euchromatin regions, thereby playing a central role in the silencing of euchromatic genes. H3 'Lys-9' trimethylation is coordinated with DNA methylation. Probably forms a complex with MBD1 and ATF7IP that represses transcription and couples DNA methylation and histone 'Lys-9' trimethylation. Its activity is dependent on MBD1 and is heritably maintained through DNA replication by being recruited by CAF-1. SETDB1 is targeted to histone H3 by TRIM28/TIF1B, a factor recruited by KRAB zinc-finger proteins. Probably forms a corepressor complex required for activated KRAS-mediated promoter hypermethylation and transcriptional silencing of tumor suppressor genes (TSGs) or other tumor-related genes in colorectal cancer (CRC) cells. Required to maintain a transcriptionally repressive state of genes in undifferentiated embryonic stem cells (ESCs). In ESCs, in collaboration with TRIM28, is also required for H3K9me3 and silencing of endogenous and introduced retroviruses in a DNA-methylation independent-pathway. Associates at promoter regions of tumor suppressor genes (TSGs) leading to their gene silencing. The SETDB1-TRIM28-ZNF274 complex may play a role in recruiting ATRX to the 3'-exons of zinc-finger coding genes with atypical chromatin signatures to establish or maintain/protect H3K9me3 at these transcriptionally active regions. The sequence is that of Histone-lysine N-methyltransferase SETDB1 from Mus musculus (Mouse).